The chain runs to 388 residues: MVLPTAPEPPTLLGYHRILSSSAGVRVSPLCLGTMSFGNGWKGVMGECDQATSFNMLDTFYESGGNFIDVANFYQGGDSERWVGEWMAQRQNRDEIVLSTKYTMGYTMFGPQKIKSNYQGNHTKSLRLSVKASLQKLQTDYIDLLYVHMWDFTTSVEEVMRSLNHLVANGKVLYLGVSDTPAWLVVKCNAFARANGLTPFSVYQGHWSCAFRDFERDILPMCESEGMGLAPWGVLGRGQFRSAEDFSREGRKMGPQDEKHRRLGEKLDQMAQQKNTKATSIAQAYVMHKAPYVFPVIGGRKVEHLKENIEALGLVLSEEEIREIDDAEPFDVGFPMNFLFETPTQSYRTNMTSKDIWQLSCNTRLETVPKQQPIEPFQGAKYFGSASK.

Tyrosine 74 acts as the Proton donor in catalysis. An NADP(+)-binding site is contributed by 233-243 (GVLGRGQFRSA).

The protein belongs to the aldo/keto reductase family. Aldo/keto reductase 2 subfamily.

It participates in mycotoxin biosynthesis; aflatoxin biosynthesis. This chain is Norsolorinic acid reductase (norA), found in Aspergillus flavus (strain ATCC 200026 / FGSC A1120 / IAM 13836 / NRRL 3357 / JCM 12722 / SRRC 167).